The chain runs to 184 residues: ATP synthase subunit b, chloroplastic (184 aa).

Residues 27–49 (LATNPINLSVVLGVLIFFGKGVL) form a helical membrane-spanning segment.

Belongs to the ATPase B chain family. As to quaternary structure, F-type ATPases have 2 components, F(1) - the catalytic core - and F(0) - the membrane proton channel. F(1) has five subunits: alpha(3), beta(3), gamma(1), delta(1), epsilon(1). F(0) has four main subunits: a(1), b(1), b'(1) and c(10-14). The alpha and beta chains form an alternating ring which encloses part of the gamma chain. F(1) is attached to F(0) by a central stalk formed by the gamma and epsilon chains, while a peripheral stalk is formed by the delta, b and b' chains.

Its subcellular location is the plastid. It is found in the chloroplast thylakoid membrane. In terms of biological role, f(1)F(0) ATP synthase produces ATP from ADP in the presence of a proton or sodium gradient. F-type ATPases consist of two structural domains, F(1) containing the extramembraneous catalytic core and F(0) containing the membrane proton channel, linked together by a central stalk and a peripheral stalk. During catalysis, ATP synthesis in the catalytic domain of F(1) is coupled via a rotary mechanism of the central stalk subunits to proton translocation. Its function is as follows. Component of the F(0) channel, it forms part of the peripheral stalk, linking F(1) to F(0). In Carica papaya (Papaya), this protein is ATP synthase subunit b, chloroplastic.